The chain runs to 1024 residues: Error-prone DNA polymerase (1024 aa).

This sequence belongs to the DNA polymerase type-C family. DnaE2 subfamily.

Its subcellular location is the cytoplasm. The catalysed reaction is DNA(n) + a 2'-deoxyribonucleoside 5'-triphosphate = DNA(n+1) + diphosphate. In terms of biological role, DNA polymerase involved in damage-induced mutagenesis and translesion synthesis (TLS). It is not the major replicative DNA polymerase. The polypeptide is Error-prone DNA polymerase (Vibrio parahaemolyticus serotype O3:K6 (strain RIMD 2210633)).